A 352-amino-acid chain; its full sequence is Rhodopsin, freshwater form (352 aa).

The Extracellular portion of the chain corresponds to 1–36 (MNGTEGPNFYVPMSNVTGVVRSPFEYPQYYLAEPWA). N-linked (GlcNAc...) asparagine glycans are attached at residues N2 and N15. A helical transmembrane segment spans residues 37–61 (YSALAAYMFFLIIAGFPINFLTLYV). Residues 62–73 (TIEHKKLRTPLN) are Cytoplasmic-facing. Residues 74-98 (YILLNLAVADLFMVFGGFTTTMYTS) traverse the membrane as a helical segment. The Extracellular portion of the chain corresponds to 99 to 113 (MHGYFVFGPTGCNIE). Cysteines 110 and 187 form a disulfide. Residues 114–133 (GFFATLGGEIALWCLVVLAV) form a helical membrane-spanning segment. The Cytoplasmic segment spans residues 134–152 (ERWMVVCKPMSNFRFGENH). The helical transmembrane segment at 153–176 (AIMGVAFTWVMALACAAPPLFGWS) threads the bilayer. Over 177-202 (RYIPEGMQCSCGMDHYAPNPETYNES) the chain is Extracellular. N-linked (GlcNAc...) asparagine glycosylation occurs at N200. A helical membrane pass occupies residues 203 to 230 (FVIYMFICHFTIPLTVISFCYGRLVCTV). Residues 231-252 (KEATAQQQESETTQRAEREVTR) are Cytoplasmic-facing. The helical transmembrane segment at 253–276 (MVIIMVISFLVCWVPYASVAWYIF) threads the bilayer. Residues 277–284 (THQGSSFG) lie on the Extracellular side of the membrane. The chain crosses the membrane as a helical span at residues 285-309 (PIFMTIPAFFAKSSSLYNPLIYICM). Position 296 is an N6-(retinylidene)lysine (K296). Over 310-352 (NKQSRNCMITTLCCGKNPFEEEEGASTTASKTEASSVSSVSPA) the chain is Cytoplasmic. C323 carries the S-palmitoyl cysteine lipid modification. Residues 330–352 (EEEGASTTASKTEASSVSSVSPA) form a disordered region. Over residues 334–352 (ASTTASKTEASSVSSVSPA) the composition is skewed to low complexity.

Belongs to the G-protein coupled receptor 1 family. Opsin subfamily. Post-translationally, phosphorylated on some or all of the serine and threonine residues present in the C-terminal region. Rod shaped photoreceptor cells which mediates vision in dim light.

It is found in the membrane. Functionally, visual pigments such as rhodopsin and porphyropsin are light-absorbing molecules that mediate vision. Rhodopsin consists of an apoprotein, opsin, covalently linked to 11-cis-retinal. This receptor is coupled to the activation of phospholipase C. Porphyropsin consists of opsin covalently linked to 11-cis 3,4-didehydroretinal. The chain is Rhodopsin, freshwater form from Anguilla anguilla (European freshwater eel).